Consider the following 142-residue polypeptide: Large ribosomal subunit protein uL11 (142 aa).

This sequence belongs to the universal ribosomal protein uL11 family. Part of the ribosomal stalk of the 50S ribosomal subunit. Interacts with L10 and the large rRNA to form the base of the stalk. L10 forms an elongated spine to which L12 dimers bind in a sequential fashion forming a multimeric L10(L12)X complex. One or more lysine residues are methylated.

In terms of biological role, forms part of the ribosomal stalk which helps the ribosome interact with GTP-bound translation factors. This Xanthomonas campestris pv. campestris (strain 8004) protein is Large ribosomal subunit protein uL11.